Here is a 403-residue protein sequence, read N- to C-terminus: Serine/threonine transporter SstT (403 aa).

Transmembrane regions (helical) follow at residues 15–35 (LGLI…AIVW), 49–69 (FISA…MTAI), 85–105 (LLYV…SFIF), 142–162 (ALLN…GMML), 183–203 (IVQL…AGTL), 218–238 (LAVI…LIVF), 246–268 (YPLV…SSAA), 289–309 (ISIP…ISVI), 317–337 (LGIG…SLAA), and 362–382 (PDVA…QDAT).

This sequence belongs to the dicarboxylate/amino acid:cation symporter (DAACS) (TC 2.A.23) family.

It is found in the cell inner membrane. It catalyses the reaction L-serine(in) + Na(+)(in) = L-serine(out) + Na(+)(out). The catalysed reaction is L-threonine(in) + Na(+)(in) = L-threonine(out) + Na(+)(out). In terms of biological role, involved in the import of serine and threonine into the cell, with the concomitant import of sodium (symport system). This Chromohalobacter salexigens (strain ATCC BAA-138 / DSM 3043 / CIP 106854 / NCIMB 13768 / 1H11) protein is Serine/threonine transporter SstT.